Here is a 1040-residue protein sequence, read N- to C-terminus: Multidrug resistance protein MdtB (1040 aa).

12 helical membrane-spanning segments follow: residues 16-36 (FIMRPVATTLLMVAILLAGII), 347-367 (LMMAIALVVMIIYLFLRNIPA), 369-389 (IIPGVAVPLSLIGTFAVMVFL), 396-416 (LTLMALTIATGFVVDDAIVVI), 440-460 (IGFTIISLTFSLIAVLIPLLF), 472-492 (FAITLAVAILISAVVSLTLTP), 537-557 (WLTLSVALSTLLLSVLLWVFI), 863-883 (LGSTVWLIVAAVVAMYIVLGI), 888-908 (FIHPITILSTLPTAGVGALLA), 911-931 (IAGSELDVIAIIGIILLIGIV), 968-988 (ILMTTLAALLGALPLMLSTGV), and 998-1018 (IGMVGGLIVSQVLTLFTTPVI).

It belongs to the resistance-nodulation-cell division (RND) (TC 2.A.6) family. MdtB subfamily. Part of a tripartite efflux system composed of MdtA, MdtB and MdtC. MdtB forms a heteromultimer with MdtC.

It is found in the cell inner membrane. Functionally, the MdtABC tripartite complex confers resistance against novobiocin and deoxycholate. This Escherichia coli O45:K1 (strain S88 / ExPEC) protein is Multidrug resistance protein MdtB.